The chain runs to 371 residues: uncharacterized protein (371 aa).

The next 7 membrane-spanning stretches (helical) occupy residues 9–29 (FTLDNIIQIGISLAILLVFLI), 58–78 (VLAFDKPARWFFVALGLFLAI), 98–118 (LIVALLCWGLCNLTATSSFIF), 133–153 (LAPFLSKLLRFVIIALSVSVI), 159–179 (YDVNGFVAGLGLGGLAFALAA), 183–203 (ISNFFGGIIIITEKPFTIGDW), and 330–350 (IIEILGAEGVQFAYPGQMVVV).

This sequence belongs to the MscS (TC 1.A.23) family.

Its subcellular location is the cell membrane. Functionally, may play a role in resistance to osmotic downshock. This is an uncharacterized protein from Bacillus subtilis (strain 168).